The sequence spans 103 residues: Thrombin inhibitor rhodniin (103 aa).

Kazal-like domains are found at residues 1-50 and 51-103; these read EGGE…PCEP and DEDE…PCRT. 6 disulfide bridges follow: Cys6–Cys31, Cys8–Cys27, Cys16–Cys48, Cys57–Cys84, Cys60–Cys80, and Cys69–Cys101.

It localises to the secreted. Thrombin-specific inhibitor. Appears to form 1:1 complexes with thrombin. Prevents blood clotting to allow the insect to feed on blood. In Rhodnius prolixus (Triatomid bug), this protein is Thrombin inhibitor rhodniin.